The chain runs to 376 residues: MAERGRKRPCGPGEHGQRIEWRKWKQQKKEEKKKWKDLKLMKKLERQRAQEEQAKRLEEEEAAAEKEDRGRPYTLSVALPGSILDNAQSPELRTYLAGQIARACAIFCVDEIVVFDEEGQDAKTVEGEFTGVGKKGQACVQLARILQYLECPQYLRKAFFPKHQDLQFAGLLNPLDSPHHMRQDEESEFREGIVVDRPTRPGHGSFVNCGMKKEVKIDKNLEPGLRVTVRLNQQQHPDCKTYHGKVVSSQDPRTKAGLYWGYTVRLASCLSAVFAEAPFQDGYDLTIGTSERGSDVASAQLPNFRHALVVFGGLQGLEAGADADPNLEVAEPSVLFDLYVNTCPGQGSRTIRTEEAILISLAALQPGLIQAGARHT.

Disordered stretches follow at residues 1–33 and 49–71; these read MAER…EEKK and AQEE…DRGR. Basic and acidic residues predominate over residues 15 to 33; it reads HGQRIEWRKWKQQKKEEKK. Threonine 289, arginine 292, glycine 312, asparagine 341, and threonine 342 together coordinate S-adenosyl-L-homocysteine. Residues arginine 292, glycine 312, asparagine 341, and threonine 342 each contribute to the S-adenosyl-L-methionine site.

Belongs to the class IV-like SAM-binding methyltransferase superfamily. Interacts with INCA1.

It is found in the cytoplasm. The protein localises to the cytoskeleton. It localises to the spindle. Its subcellular location is the chromosome. The protein resides in the centromere. It is found in the kinetochore. The protein localises to the microtubule organizing center. It localises to the centrosome. The catalysed reaction is uridine in 28S rRNA + S-adenosyl-L-methionine = N(3)-methyluridine in 28S rRNA + S-adenosyl-L-homocysteine + H(+). S-adenosyl-L-methionine-dependent methyltransferase that specifically methylates the N3 position of a uridine in 28S rRNA. Required for association of the centrosomes with the poles of the bipolar mitotic spindle during metaphase. Also involved in chromosome alignment. May promote centrosome maturation probably by recruiting A-kinase anchor protein AKAP9 to centrosomes in early mitosis. Binds specifically to miRNA MIR145 hairpin, regulates MIR145 expression at a postranscriptional level. This Homo sapiens (Human) protein is 28S rRNA (uridine-N(3))-methyltransferase.